The following is an 872-amino-acid chain: MLCDNLENWCLRMSDRMWARQRFITQGCIERGRLKASAESESKVILYRAPLGYGKSVQVAFEAGTQGREEGGVAYINTRSYPGSGEITDSLLAALILYQIKGREPWSVIQSNDDIIESLRDTLCNAKNPIKICIDGIGEAEHGVGLVENLICETPNNVKFYIAPSNAGALARLSMMAGVVTYGAHDLVFTEEEVCELPGMHSAKAKNVIEATGGWPALVGLMCHTSNPNLPAATWPETRSYFRNNLLNALPNNTREFICKAAMLEEISVACYDYVYKTEEAHKEIPFINENYALFTPTESSRECMVMHPVLREYLRGLFDSIQRERRSYVLKRVAFWHWRRGEYLHSINAAQEASDHSWARAVSDSIILDVALRQGEIEVLRTWFEKVPVRTIKKIASLSISYAWILYFSQQARQAEKILASSTESCSRGLDNLDEKGWRKLVDAVGKATQDQFAQSQTLCQQWIDTFGERNMVGKGAALTCQAYIASSDRRFEDLEQLLHRGAVANQSSNQHYAFVWLKTAELQAEIFKGDIAHAMSILLEANKTAEKMGVSKTFLNKMLGSLELQILHEKSPSLISYESAEESFNFALNYGVTDILWGCTQTFSSFLYQQGLRDRAMAILEQTRIAACERDLPRLNMLAKIQLAEFTLINDEELEPPILPDESELTFLPNQNQAIRARIALVNSMYRLRLGKQFGVAEKYAKKALQSASAISDARTKIAAQYCQALAVFGLGSSKLAKRTIIDADQLTEHLSCYFTRDWIKEALMSFSPIARDLFDTLPESAETNATKDLEVRKEEADARPKLTNTQSTITIKQISLLKCVSSGMTNKEIAERLLITEDTVKWHLKKIFSELKVTNRVRAVSEARLRGLL.

The region spanning leucine 805 to glycine 870 is the HTH luxR-type domain. Positions asparagine 829 to lysine 848 form a DNA-binding region, H-T-H motif.

The protein operates within hydrocarbon metabolism; alkane degradation. In terms of biological role, this protein activates the expression of AlkB1 in the presence of alkanes. This Alcanivorax borkumensis (strain ATCC 700651 / DSM 11573 / NCIMB 13689 / SK2) protein is HTH-type transcriptional regulator AlkS (alkS).